Here is a 382-residue protein sequence, read N- to C-terminus: ATP phosphoribosyltransferase regulatory subunit (382 aa).

Belongs to the class-II aminoacyl-tRNA synthetase family. HisZ subfamily. Heteromultimer composed of HisG and HisZ subunits.

It localises to the cytoplasm. Its pathway is amino-acid biosynthesis; L-histidine biosynthesis; L-histidine from 5-phospho-alpha-D-ribose 1-diphosphate: step 1/9. In terms of biological role, required for the first step of histidine biosynthesis. May allow the feedback regulation of ATP phosphoribosyltransferase activity by histidine. The sequence is that of ATP phosphoribosyltransferase regulatory subunit from Burkholderia pseudomallei (strain 1106a).